The sequence spans 73 residues: Antimicrobial peptide TsAP-1 (73 aa).

The first 22 residues, 1-22 (MQIKHLITLFFLVLIVADQCSA), serve as a signal peptide directing secretion. The residue at position 39 (K39) is a Lysine amide. A propeptide spanning residues 45–73 (EISAQIEQYKDLQKREAELEELLDRLPMY) is cleaved from the precursor.

As to expression, expressed by the venom gland.

It localises to the secreted. Its function is as follows. Has a low antimicrobial activity against S.aureus, E.coli, and C.albicans (MICs 120-160 uM). Has a low hemolytic activity (4% at 160 uM). Also inhibits the growth of two cancer cell lines on a total of five (the squamous carcinoma cell line H157 (IC(50)=55.9 uM) and the lung adenocarcinoma cell line H838 (IC(50)=52.5 uM)). In Tityus serrulatus (Brazilian scorpion), this protein is Antimicrobial peptide TsAP-1.